The following is a 470-amino-acid chain: MAKTLYEKVWDAHLVVEPAGEAPIIYVDRHLVHEVTSPQAFSGLKMAGRPLRAVEKTFATMDHNTSTKSASLTALSPMARTQVETLADNCRDFNVRLYDIHHPNQGIVHVMGPELGITLPGTVIVCGDSHTATHGAFGALAFGIGTSEVEHVLATQTLRQLKAKTMKIEVRGKVADGITAKDIVLAIIGKIGMDGGTGYVVEFCGEAIRDLSMEGRMTLCNMAIEMGAKAGMVAPDETTFAYLEGREFAPKGDAWQQALADWRELHTDADAVFDAEVVLEAAAIAPQLTWGTNPGQVVAIDGVVPNPADETNPVVRTSMEKALAYVDLTPGTPMTDIAINKVFIGSCTNSRIEDLRAAAAQAKGRKVASGVTAIVVPGSGQVKLQAEAEGLDKIFLEAGFEWRLPGCSMCLAMNDDRLEAGDRCASTSNRNFEGRQGRGSRTHLVSPAMAAAAAVAGHFVDIRVHRPLED.

[4Fe-4S] cluster-binding residues include cysteine 347, cysteine 407, and cysteine 410.

This sequence belongs to the aconitase/IPM isomerase family. LeuC type 1 subfamily. As to quaternary structure, heterodimer of LeuC and LeuD. [4Fe-4S] cluster is required as a cofactor.

It carries out the reaction (2R,3S)-3-isopropylmalate = (2S)-2-isopropylmalate. The protein operates within amino-acid biosynthesis; L-leucine biosynthesis; L-leucine from 3-methyl-2-oxobutanoate: step 2/4. Functionally, catalyzes the isomerization between 2-isopropylmalate and 3-isopropylmalate, via the formation of 2-isopropylmaleate. This chain is 3-isopropylmalate dehydratase large subunit, found in Shewanella amazonensis (strain ATCC BAA-1098 / SB2B).